A 602-amino-acid polypeptide reads, in one-letter code: Proline--tRNA ligase (602 aa).

This sequence belongs to the class-II aminoacyl-tRNA synthetase family. ProS type 1 subfamily. In terms of assembly, homodimer.

Its subcellular location is the cytoplasm. It carries out the reaction tRNA(Pro) + L-proline + ATP = L-prolyl-tRNA(Pro) + AMP + diphosphate. Its function is as follows. Catalyzes the attachment of proline to tRNA(Pro) in a two-step reaction: proline is first activated by ATP to form Pro-AMP and then transferred to the acceptor end of tRNA(Pro). As ProRS can inadvertently accommodate and process non-cognate amino acids such as alanine and cysteine, to avoid such errors it has two additional distinct editing activities against alanine. One activity is designated as 'pretransfer' editing and involves the tRNA(Pro)-independent hydrolysis of activated Ala-AMP. The other activity is designated 'posttransfer' editing and involves deacylation of mischarged Ala-tRNA(Pro). The misacylated Cys-tRNA(Pro) is not edited by ProRS. This chain is Proline--tRNA ligase, found in Thermosynechococcus vestitus (strain NIES-2133 / IAM M-273 / BP-1).